Here is a 237-residue protein sequence, read N- to C-terminus: Matrix protein (237 aa).

Low complexity predominate over residues 1–10; sequence MSSLKKILGL. The tract at residues 1 to 23 is disordered; that stretch reads MSSLKKILGLKGKGKKSKKLGIA. The dynamin binding signature appears at 2-4; it reads SSL. The short motif at 24 to 27 is the PPXY motif element; the sequence is PPPY. Residues 37–40 carry the PTAP/PSAP motif motif; it reads PSAP.

This sequence belongs to the vesiculoviruses matrix protein family. In terms of assembly, homomultimer. Interacts with viral nucleocapsid; this interaction contributes to the virion assembly. Interacts with the viral envelope glycoprotein; this interaction contributes to the virion assembly. Interacts with host RAE1-NUP98 complex. Interacts with host NEDD4 and TSG101. Interacts with host dynamin. Interacts with host NDUFAF4; the interaction inhibits viral propagation and is independent of interferon activation. Interacts with host GTF2H5; the interaction may inhibit host transcription. Post-translationally, phosphorylated by host.

It localises to the virion. Its subcellular location is the host endomembrane system. The protein resides in the host nucleus membrane. It is found in the host nucleus. The protein localises to the host cytoplasm. Forms a double layer around the helical nucleocapsid, the inner matrix layer binding to the N helix and the outer matrix layer binding to the envelope glycoprotein. Plays a major role in assembly and budding of virion, by recruiting cellular partners of the ESCRT complexes that play a key role in releasing the budding particle from the host membrane. Condensates the ribonucleocapsid core during virus assembly. Inhibits the host mRNA nuclear export thereby inducing the shut off of cellular transcription and preventing the interferon signaling and the establishment of antiviral state in infected cells. This shutoff presumably inhibits interferon signaling and thus establishment of antiviral state in virus infected cells. Induces cell-rounding, cytoskeleton disorganization and apoptosis in infected cell. Inhibits host transcription, possibly through interaction with host DNA repair factor IIH/TFIIH GTF2H5 subunit. This chain is Matrix protein (M), found in Aedes (Bovine).